A 787-amino-acid chain; its full sequence is Protein translocase subunit SecA (787 aa).

ATP-binding positions include Q85, 103–107, and D492; that span reads GEGKT.

Belongs to the SecA family. As to quaternary structure, monomer and homodimer. Part of the essential Sec protein translocation apparatus which comprises SecA, SecYEG and auxiliary proteins SecDF. Other proteins may also be involved.

The protein localises to the cell membrane. It is found in the cytoplasm. It catalyses the reaction ATP + H2O + cellular proteinSide 1 = ADP + phosphate + cellular proteinSide 2.. Part of the Sec protein translocase complex. Interacts with the SecYEG preprotein conducting channel. Has a central role in coupling the hydrolysis of ATP to the transfer of proteins into and across the cell membrane, serving as an ATP-driven molecular motor driving the stepwise translocation of polypeptide chains across the membrane. The protein is Protein translocase subunit SecA of Limosilactobacillus reuteri (strain DSM 20016) (Lactobacillus reuteri).